The following is a 456-amino-acid chain: Bifunctional protein GlmU (456 aa).

Residues 1-229 (MLNNAMSVVI…LSEVEGVNNR (229 aa)) are pyrophosphorylase. Residues 11–14 (LAAG), lysine 25, glutamine 76, 81–82 (GT), 103–105 (YGD), glycine 140, glutamate 154, asparagine 169, and asparagine 227 contribute to the UDP-N-acetyl-alpha-D-glucosamine site. Aspartate 105 lines the Mg(2+) pocket. Position 227 (asparagine 227) interacts with Mg(2+). The linker stretch occupies residues 230-250 (LQLSRLERVYQSEQAEKLLLA). Positions 251-456 (GVMLRDPARF…EGWRRPVKKK (206 aa)) are N-acetyltransferase. UDP-N-acetyl-alpha-D-glucosamine is bound by residues arginine 333 and lysine 351. Histidine 363 serves as the catalytic Proton acceptor. Positions 366 and 377 each coordinate UDP-N-acetyl-alpha-D-glucosamine. Residues alanine 380, 386 to 387 (NY), serine 405, alanine 423, and arginine 440 each bind acetyl-CoA.

It in the N-terminal section; belongs to the N-acetylglucosamine-1-phosphate uridyltransferase family. The protein in the C-terminal section; belongs to the transferase hexapeptide repeat family. In terms of assembly, homotrimer. The cofactor is Mg(2+).

Its subcellular location is the cytoplasm. It carries out the reaction alpha-D-glucosamine 1-phosphate + acetyl-CoA = N-acetyl-alpha-D-glucosamine 1-phosphate + CoA + H(+). The catalysed reaction is N-acetyl-alpha-D-glucosamine 1-phosphate + UTP + H(+) = UDP-N-acetyl-alpha-D-glucosamine + diphosphate. Its pathway is nucleotide-sugar biosynthesis; UDP-N-acetyl-alpha-D-glucosamine biosynthesis; N-acetyl-alpha-D-glucosamine 1-phosphate from alpha-D-glucosamine 6-phosphate (route II): step 2/2. It functions in the pathway nucleotide-sugar biosynthesis; UDP-N-acetyl-alpha-D-glucosamine biosynthesis; UDP-N-acetyl-alpha-D-glucosamine from N-acetyl-alpha-D-glucosamine 1-phosphate: step 1/1. It participates in bacterial outer membrane biogenesis; LPS lipid A biosynthesis. Functionally, catalyzes the last two sequential reactions in the de novo biosynthetic pathway for UDP-N-acetylglucosamine (UDP-GlcNAc). The C-terminal domain catalyzes the transfer of acetyl group from acetyl coenzyme A to glucosamine-1-phosphate (GlcN-1-P) to produce N-acetylglucosamine-1-phosphate (GlcNAc-1-P), which is converted into UDP-GlcNAc by the transfer of uridine 5-monophosphate (from uridine 5-triphosphate), a reaction catalyzed by the N-terminal domain. The protein is Bifunctional protein GlmU of Escherichia coli O139:H28 (strain E24377A / ETEC).